We begin with the raw amino-acid sequence, 435 residues long: tRNA modification GTPase MnmE (435 aa).

Positions 20, 77, and 117 each coordinate (6S)-5-formyl-5,6,7,8-tetrahydrofolate. Residues 214–359 enclose the TrmE-type G domain; sequence GLKIVIAGAP…FIKKLESFCH (146 aa). Residues 224–229, 243–249, and 268–271 each bind GTP; these read NSGKSS, TEEAGTT, and DTAG. The Mg(2+) site is built by Ser228 and Thr249. Lys435 is a (6S)-5-formyl-5,6,7,8-tetrahydrofolate binding site.

Belongs to the TRAFAC class TrmE-Era-EngA-EngB-Septin-like GTPase superfamily. TrmE GTPase family. Homodimer. Heterotetramer of two MnmE and two MnmG subunits. Requires K(+) as cofactor.

Its subcellular location is the cytoplasm. Its function is as follows. Exhibits a very high intrinsic GTPase hydrolysis rate. Involved in the addition of a carboxymethylaminomethyl (cmnm) group at the wobble position (U34) of certain tRNAs, forming tRNA-cmnm(5)s(2)U34. In Bartonella tribocorum (strain CIP 105476 / IBS 506), this protein is tRNA modification GTPase MnmE.